Here is a 215-residue protein sequence, read N- to C-terminus: Adenylate kinase (215 aa).

Residue 10 to 15 participates in ATP binding; sequence GAGKGT. An NMP region spans residues 30 to 58; that stretch reads STGDMLREAKRSGTLEKRYLDIMDSGGLL. AMP-binding positions include Thr-31, Arg-36, 56–58, 84–87, and Gln-91; these read GLL and GFPR. An LID region spans residues 128-158; the sequence is HRRTDKRSGQIYHLVYNPPPPGAELEHRADD. ATP-binding positions include Arg-129 and 138–139; that span reads IY. The AMP site is built by Arg-155 and Arg-166. Gly-194 is a binding site for ATP.

It belongs to the adenylate kinase family. Monomer.

Its subcellular location is the cytoplasm. It carries out the reaction AMP + ATP = 2 ADP. The protein operates within purine metabolism; AMP biosynthesis via salvage pathway; AMP from ADP: step 1/1. Its function is as follows. Catalyzes the reversible transfer of the terminal phosphate group between ATP and AMP. Plays an important role in cellular energy homeostasis and in adenine nucleotide metabolism. In Sorangium cellulosum (strain So ce56) (Polyangium cellulosum (strain So ce56)), this protein is Adenylate kinase.